The following is a 309-amino-acid chain: MEKVLVFGHKNPDTDAICSAIAYAELKKELGMNAEPVRLGEISGETQFALDYFKVEGPRFVETVASEVDNVILVDHNERQQSANDIESVRVLEVIDHHRIANFETSDPIYYRCEPVGCTATILNKMYKENGVTIRKEVAGLMLSAIISDSLLFKSPTCTEQDVAAARELAQIAGVDADNYGLEMLKAGADLSGKTMEQLISLDAKEFQMGNAKVEIAQVNAVDTNDVLVHQAELEKVISAVVEEKGLDLFLFVVTDILTNDSVGLAIGKAANVVEKAYNVSLENNTATLKGVVSRKKQIVPVLTEAFQA.

Mn(2+)-binding residues include His9, Asp13, Asp15, Asp75, His97, and Asp149.

The protein belongs to the PPase class C family. Requires Mn(2+) as cofactor.

It localises to the cytoplasm. It catalyses the reaction diphosphate + H2O = 2 phosphate + H(+). This Bacillus cereus (strain B4264) protein is Probable manganese-dependent inorganic pyrophosphatase.